A 434-amino-acid polypeptide reads, in one-letter code: UPF0597 protein CLK_1462 (434 aa).

This sequence belongs to the UPF0597 family.

The protein is UPF0597 protein CLK_1462 of Clostridium botulinum (strain Loch Maree / Type A3).